The primary structure comprises 283 residues: Bifunctional protein FolD (283 aa).

NADP(+) contacts are provided by residues 166 to 168 (GQS), S191, and I232.

Belongs to the tetrahydrofolate dehydrogenase/cyclohydrolase family. Homodimer.

The catalysed reaction is (6R)-5,10-methylene-5,6,7,8-tetrahydrofolate + NADP(+) = (6R)-5,10-methenyltetrahydrofolate + NADPH. The enzyme catalyses (6R)-5,10-methenyltetrahydrofolate + H2O = (6R)-10-formyltetrahydrofolate + H(+). The protein operates within one-carbon metabolism; tetrahydrofolate interconversion. Functionally, catalyzes the oxidation of 5,10-methylenetetrahydrofolate to 5,10-methenyltetrahydrofolate and then the hydrolysis of 5,10-methenyltetrahydrofolate to 10-formyltetrahydrofolate. The protein is Bifunctional protein FolD of Laribacter hongkongensis (strain HLHK9).